The sequence spans 359 residues: tRNA-specific 2-thiouridylase MnmA (359 aa).

ATP is bound by residues 10–17 (GISGGVDS) and leucine 36. Residue cysteine 101 is the Nucleophile of the active site. Cysteine 101 and cysteine 197 are disulfide-bonded. Glycine 125 is a binding site for ATP. The interaction with tRNA stretch occupies residues 147 to 149 (KDQ). Residue cysteine 197 is the Cysteine persulfide intermediate of the active site. The segment at 306–307 (RY) is interaction with tRNA.

It belongs to the MnmA/TRMU family.

The protein localises to the cytoplasm. The enzyme catalyses S-sulfanyl-L-cysteinyl-[protein] + uridine(34) in tRNA + AH2 + ATP = 2-thiouridine(34) in tRNA + L-cysteinyl-[protein] + A + AMP + diphosphate + H(+). Functionally, catalyzes the 2-thiolation of uridine at the wobble position (U34) of tRNA, leading to the formation of s(2)U34. The polypeptide is tRNA-specific 2-thiouridylase MnmA (Chlorobium chlorochromatii (strain CaD3)).